Consider the following 229-residue polypeptide: Prolactin (229 aa).

Positions 1–30 (MSNRGASLKGLFLAVLLVSNTLLTKEGVTS) are cleaved as a signal peptide. 3 disulfides stabilise this stretch: C34/C41, C88/C204, and C221/C229.

The protein belongs to the somatotropin/prolactin family.

The protein resides in the secreted. The polypeptide is Prolactin (PRL) (Gallus gallus (Chicken)).